Consider the following 480-residue polypeptide: Ochratoxinase (480 aa).

H111, H113, K246, H287, and H307 together coordinate Zn(2+). Residue K246 is part of the active site. Residue D378 is part of the active site.

The protein belongs to the metallo-dependent hydrolases superfamily. Ochratoxinase amidase 2 family. As to quaternary structure, homooctamer. Zn(2+) is required as a cofactor.

It localises to the secreted. The enzyme catalyses ochratoxin A + H2O = ochratoxin alpha + L-phenylalanine. The Zn(2+)-specific chelator 1,10-phenanthroline inhibits the enzyme activity. In terms of biological role, carboxypeptidase that catalyzes the release of a C-terminal amino acid with specific catalytic activity for aromatic amino acids such as phenylalanine. Is able to degrade ochratoxin A, one of the five major mycotoxins most harmful to humans and animals that is produced by Aspergillus and Penicillium species and occurs in a wide range of agricultural products. This Aspergillus niger (strain ATCC 1015 / CBS 113.46 / FGSC A1144 / LSHB Ac4 / NCTC 3858a / NRRL 328 / USDA 3528.7) protein is Ochratoxinase.